Here is a 377-residue protein sequence, read N- to C-terminus: Phospho-N-acetylmuramoyl-pentapeptide-transferase (377 aa).

10 helical membrane passes run 2 to 22 (IQLLMAAGLGLVFSIFGTPAL), 55 to 75 (VAILLSVVAAYLVTHLISVLA), 82 to 102 (ITLSGLLALGLMLGMGMVGFL), 122 to 142 (MVLQGAIGSAFAVLVLFFPDA), 162 to 182 (LAFAGPVVGLILFVVWVNLIA), 195 to 215 (LDGLATGASILVFSGYMLITL), 236 to 256 (PMDLSIVAAALVGALIGFLWW), 263 to 283 (IFMGDTGSLGLGGALAAFAVL), 288 to 308 (LLLVLIAGLFVVITMSVILQV), and 343 to 363 (FWVIAGLFVAAALGVFYGDWL).

It belongs to the glycosyltransferase 4 family. MraY subfamily. It depends on Mg(2+) as a cofactor.

The protein resides in the cell membrane. It catalyses the reaction UDP-N-acetyl-alpha-D-muramoyl-L-alanyl-gamma-D-glutamyl-meso-2,6-diaminopimeloyl-D-alanyl-D-alanine + di-trans,octa-cis-undecaprenyl phosphate = di-trans,octa-cis-undecaprenyl diphospho-N-acetyl-alpha-D-muramoyl-L-alanyl-D-glutamyl-meso-2,6-diaminopimeloyl-D-alanyl-D-alanine + UMP. Its pathway is cell wall biogenesis; peptidoglycan biosynthesis. Its function is as follows. Catalyzes the initial step of the lipid cycle reactions in the biosynthesis of the cell wall peptidoglycan: transfers peptidoglycan precursor phospho-MurNAc-pentapeptide from UDP-MurNAc-pentapeptide onto the lipid carrier undecaprenyl phosphate, yielding undecaprenyl-pyrophosphoryl-MurNAc-pentapeptide, known as lipid I. This chain is Phospho-N-acetylmuramoyl-pentapeptide-transferase, found in Kocuria rhizophila (strain ATCC 9341 / DSM 348 / NBRC 103217 / DC2201).